The primary structure comprises 726 residues: Transmembrane channel-like protein 8 (726 aa).

Over Met1–Arg114 the chain is Cytoplasmic. Ser6 is modified (phosphoserine). The chain crosses the membrane as a helical span at residues Phe115 to Leu135. Over Val136–Ser200 the chain is Lumenal. N-linked (GlcNAc...) asparagine glycosylation is present at Asn148. Residues Ile201–Leu221 traverse the membrane as a helical segment. Residues Arg222–Tyr299 are Cytoplasmic-facing. Residues Leu300–Ala320 traverse the membrane as a helical segment. Topologically, residues Thr321–Tyr338 are lumenal. Residues Leu339–Val359 traverse the membrane as a helical segment. The Cytoplasmic segment spans residues Gln360–Glu426. A TMC domain region spans residues Glu362–Ser530. Residues Leu427–Leu447 traverse the membrane as a helical segment. The Lumenal portion of the chain corresponds to Pro448–Gly488. Residues Leu489–Ile509 traverse the membrane as a helical segment. Topologically, residues Lys510–Thr531 are cytoplasmic. A helical membrane pass occupies residues Phe532–Val552. At Val553–Leu594 the chain is on the lumenal side. A glycan (N-linked (GlcNAc...) asparagine) is linked at Asn567. The chain crosses the membrane as a helical span at residues Gly595–Val615. The Cytoplasmic portion of the chain corresponds to Ser616–Leu726. Residues Pro651–Leu726 are disordered. A compositionally biased stretch (pro residues) spans Glu652–Lys662. Phosphoserine is present on residues Ser658 and Ser673.

The protein belongs to the TMC family. As to quaternary structure, interacts with TMC6. Interacts and forms a complex with TMC6 and CIB1; the interaction stabilizes each component of the complex. Interacts and forms a complex with TMC6 and SLC30A1/ZNT1; the interaction regulates zinc transport into the ER. Interacts with TRADD; the interaction competes with TRADD/RIPK1/TRAF2/cIAPs complex I formation and facilites complex II formation. (Microbial infection) Interacts with human papillomavirus 16/HPV16 protein E5; the interaction alleviates TMC8-mediated transcription factors inhibition. Expressed in placenta, prostate and testis.

It localises to the endoplasmic reticulum membrane. The protein localises to the golgi apparatus membrane. Its subcellular location is the nucleus membrane. Functionally, acts as a regulatory protein involved in the regulation of numerous cellular processes. Together with its homolog TMC6/EVER1, forms a complex with calcium-binding protein CIB1 in lymphocytes and keratynocytes where TMC6 and TMC8 stabilize CIB1 levels and reciprocally. Together with TMC6, also forms a complex with and activates zinc transporter ZNT1 at the ER membrane of keratynocytes, thereby facilitating zinc uptake into the ER. Also inhibits receptor-mediated calcium release from ER stores and calcium activated and volume regulated chloride channels. Down-regulates the activity of transcription factors induced by zinc and cytokines. Also sequesters TRADD which impairs the recruitment of TRAF2 and RIPK1 in the pro-survival complex I and promotes proapoptotic complex II formation, and may therefore be involved in TNF-induced cell death/survival decisions. The polypeptide is Transmembrane channel-like protein 8 (Homo sapiens (Human)).